A 499-amino-acid chain; its full sequence is 2-isopropylmalate synthase (499 aa).

The Pyruvate carboxyltransferase domain maps to 5–267 (IKIFDTTLRD…ETGINLGEIA (263 aa)). Mn(2+) contacts are provided by aspartate 14, histidine 202, histidine 204, and asparagine 238. The interval 391 to 499 (SVEVLHVISG…YLSALNRIRR (109 aa)) is regulatory domain.

The protein belongs to the alpha-IPM synthase/homocitrate synthase family. LeuA type 1 subfamily. Mn(2+) is required as a cofactor.

It localises to the cytoplasm. It catalyses the reaction 3-methyl-2-oxobutanoate + acetyl-CoA + H2O = (2S)-2-isopropylmalate + CoA + H(+). Its pathway is amino-acid biosynthesis; L-leucine biosynthesis; L-leucine from 3-methyl-2-oxobutanoate: step 1/4. In terms of biological role, catalyzes the condensation of the acetyl group of acetyl-CoA with 3-methyl-2-oxobutanoate (2-ketoisovalerate) to form 3-carboxy-3-hydroxy-4-methylpentanoate (2-isopropylmalate). The polypeptide is 2-isopropylmalate synthase (Pyrococcus furiosus (strain ATCC 43587 / DSM 3638 / JCM 8422 / Vc1)).